Here is a 466-residue protein sequence, read N- to C-terminus: Ras-GEF domain-containing family member 1C (466 aa).

Residues 1-23 (MPQTLSASDMVTPGSLSPPTTEP) show a composition bias toward polar residues. Disordered stretches follow at residues 1–35 (MPQT…PLLD) and 443–466 (SESP…LGKT). Positions 34–164 (LDGAPSSASL…LLQALHQKLA (131 aa)) constitute an N-terminal Ras-GEF domain. One can recognise a Ras-GEF domain in the interval 200–446 (DPYTLAQQLT…YLASYESESP (247 aa)).

Its function is as follows. Guanine nucleotide exchange factor (GEF). The polypeptide is Ras-GEF domain-containing family member 1C (RASGEF1C) (Macaca fascicularis (Crab-eating macaque)).